The chain runs to 72 residues: Translation initiation factor IF-1 (72 aa).

The 72-residue stretch at 1–72 folds into the S1-like domain; the sequence is MAKEDNIEMQ…SKGRIVFRSR (72 aa).

This sequence belongs to the IF-1 family. As to quaternary structure, component of the 30S ribosomal translation pre-initiation complex which assembles on the 30S ribosome in the order IF-2 and IF-3, IF-1 and N-formylmethionyl-tRNA(fMet); mRNA recruitment can occur at any time during PIC assembly.

The protein localises to the cytoplasm. One of the essential components for the initiation of protein synthesis. Stabilizes the binding of IF-2 and IF-3 on the 30S subunit to which N-formylmethionyl-tRNA(fMet) subsequently binds. Helps modulate mRNA selection, yielding the 30S pre-initiation complex (PIC). Upon addition of the 50S ribosomal subunit IF-1, IF-2 and IF-3 are released leaving the mature 70S translation initiation complex. This chain is Translation initiation factor IF-1, found in Shewanella pealeana (strain ATCC 700345 / ANG-SQ1).